The chain runs to 141 residues: Hemoglobin subunit alpha (141 aa).

The region spanning 1 to 141 (VLSSDDKCNV…VSSVLTSKYR (141 aa)) is the Globin domain. An O2-binding site is contributed by histidine 58. Histidine 87 is a heme b binding site.

Belongs to the globin family. In terms of assembly, heterotetramer of two alpha chains and two beta chains. Red blood cells.

Its function is as follows. Involved in oxygen transport from the lung to the various peripheral tissues. Has antimicrobial activity against B.subtilis ATCC 6633. Has antioxidant activity. The chain is Hemoglobin subunit alpha from Crocodylus siamensis (Siamese crocodile).